Here is a 227-residue protein sequence, read N- to C-terminus: UPF0758 protein LPC_1989 (227 aa).

The MPN domain occupies 102-225 (QLSNTQQTYA…YSIFAENKWV (124 aa)). Positions 173, 175, and 186 each coordinate Zn(2+). A JAMM motif motif is present at residues 173–186 (HNHPSGLSDASQQD).

Belongs to the UPF0758 family.

The protein is UPF0758 protein LPC_1989 of Legionella pneumophila (strain Corby).